The chain runs to 173 residues: uncharacterized protein (173 aa).

3 helical membrane-spanning segments follow: residues 24 to 44, 82 to 102, and 135 to 155; these read VAFI…WLFF, YILF…SYFI, and LIKR…ILFS.

The protein resides in the cell membrane. This is an uncharacterized protein from Rickettsia prowazekii (strain Madrid E).